The chain runs to 149 residues: Transcriptional repressor NrdR (149 aa).

A zinc finger lies at 3 to 34; sequence CPFCGHAATQVIDTRMSEEGDTVRRRRRCESC. The 91-residue stretch at 49 to 139 folds into the ATP-cone domain; that stretch reads PAVVKKNGSR…VYRSFEDVSE (91 aa).

It belongs to the NrdR family. The cofactor is Zn(2+).

Negatively regulates transcription of bacterial ribonucleotide reductase nrd genes and operons by binding to NrdR-boxes. The polypeptide is Transcriptional repressor NrdR (Ralstonia nicotianae (strain ATCC BAA-1114 / GMI1000) (Ralstonia solanacearum)).